A 317-amino-acid chain; its full sequence is Apolipoprotein E (317 aa).

Positions 1 to 18 are cleaved as a signal peptide; that stretch reads MKALWVALVVTLLAGCRA. 8 tandem repeats follow at residues 79–100, 101–122, 123–144, 145–166, 167–188, 189–210, 211–232, and 233–254. Residues 79–254 form an 8 X 22 AA approximate tandem repeats region; sequence ALMEETMKEV…RLDKMREQLE (176 aa). Met142 carries the methionine sulfoxide modification. Positions 157–167 are LDL and other lipoprotein receptors binding; it reads HLRKLRKRLLR. Heparin is bound at residue 161–164; it reads LRKR. Residues 209 to 289 are lipid-binding and lipoprotein association; that stretch reads TATTSTLGSQ…GWFQPLVEDL (81 aa). Thr211 carries O-linked (GalNAc...) threonine glycosylation. A heparin-binding site is contributed by 228-235; sequence GQKLRGRL. The homooligomerization stretch occupies residues 265–317; the sequence is SQMRLQAETFQARLKGWFQPLVEDLQRQWAGLVEKVQQLAVGTTPTPAASKNQ. The interval 277–289 is specificity for association with VLDL; it reads RLKGWFQPLVEDL. The O-linked (GalNAc...) threonine glycan is linked to Thr310.

It belongs to the apolipoprotein A1/A4/E family. Homotetramer. May interact with ABCA1; functionally associated with ABCA1 in the biogenesis of HDLs. May interact with APP/A4 amyloid-beta peptide; the interaction is extremely stable in vitro but its physiological significance is unclear. May interact with MAPT. May interact with MAP2. In the cerebrospinal fluid, interacts with secreted SORL1. Interacts with PMEL; this allows the loading of PMEL luminal fragment on ILVs to induce fibril nucleation. Post-translationally, APOE exists as multiple glycosylated and sialylated glycoforms within cells and in plasma. The extent of glycosylation and sialylation are tissue and context specific. In terms of processing, glycated in plasma VLDL. Phosphorylated by FAM20C in the extracellular medium.

The protein resides in the secreted. The protein localises to the extracellular space. It is found in the extracellular matrix. Its subcellular location is the extracellular vesicle. It localises to the endosome. The protein resides in the multivesicular body. APOE is an apolipoprotein, a protein associating with lipid particles, that mainly functions in lipoprotein-mediated lipid transport between organs via the plasma and interstitial fluids. APOE is a core component of plasma lipoproteins and is involved in their production, conversion and clearance. Apolipoproteins are amphipathic molecules that interact both with lipids of the lipoprotein particle core and the aqueous environment of the plasma. As such, APOE associates with chylomicrons, chylomicron remnants, very low density lipoproteins (VLDL) and intermediate density lipoproteins (IDL) but shows a preferential binding to high-density lipoproteins (HDL). It also binds a wide range of cellular receptors including the LDL receptor/LDLR and the very low-density lipoprotein receptor/VLDLR that mediate the cellular uptake of the APOE-containing lipoprotein particles. Finally, APOE also has a heparin-binding activity and binds heparan-sulfate proteoglycans on the surface of cells, a property that supports the capture and the receptor-mediated uptake of APOE-containing lipoproteins by cells. The polypeptide is Apolipoprotein E (APOE) (Camelus dromedarius (Dromedary)).